We begin with the raw amino-acid sequence, 884 residues long: E3 ubiquitin-protein ligase BRE1-like 1 (884 aa).

Residues 1–37 form a disordered region; it reads MGSTGEPDRKRRLSSSVAPGGGAPVSPAKRLAVAPTS. Residues 49–86 are a coiled coil; that stretch reads YKNQKLSEQLEAHKFEYRALENKFAGLKEKQRTHNETL. A disordered region spans residues 107 to 127; that stretch reads KSGSPNSSPGSGHNNVQKDGT. A compositionally biased stretch (low complexity) spans 108–121; it reads SGSPNSSPGSGHNN. Coiled coils occupy residues 216–541, 580–663, 696–762, and 789–827; these read LNNV…ELKL, SKLE…LQQI, RNLQ…QSLD, and KKRIEDDLEVMSRKASSLRAKARESAVLEKLRHEVKEYR. Residues 832 to 871 form an RING-type zinc finger; sequence CGICHDRQKEVVITKCYHLFCNQCIQKSLGNRQRRCPSCS.

The protein belongs to the BRE1 family. As to quaternary structure, interacts with SKIPA. Interacts with HUB2.

It localises to the nucleus. The enzyme catalyses S-ubiquitinyl-[E2 ubiquitin-conjugating enzyme]-L-cysteine + [acceptor protein]-L-lysine = [E2 ubiquitin-conjugating enzyme]-L-cysteine + N(6)-ubiquitinyl-[acceptor protein]-L-lysine.. The protein operates within protein modification; protein ubiquitination. E3 ubiquitin-protein ligase that monoubiquitinates H2B to form H2BK143ub1. H2BK143ub1 gives a specific tag for epigenetic transcriptional activation and is a prerequisite for H3 Lys-4 methylation (H3K4me). It thereby plays a central role in histone code and gene regulation. H2B monoubiquitination (H2BK143ub1), mediated by HUB1, modulates transcriptional regulation of anther development, likely by promoting histone H3K4 dimethylation (H3K4me2) in the chromatin of the key tapetum degradation-related genes C4, CP1 and UDT1. In Oryza sativa subsp. japonica (Rice), this protein is E3 ubiquitin-protein ligase BRE1-like 1.